A 287-amino-acid polypeptide reads, in one-letter code: Elongation factor Ts (287 aa).

The tract at residues 80–83 is involved in Mg(2+) ion dislocation from EF-Tu; that stretch reads TDFL.

The protein belongs to the EF-Ts family.

The protein resides in the cytoplasm. Functionally, associates with the EF-Tu.GDP complex and induces the exchange of GDP to GTP. It remains bound to the aminoacyl-tRNA.EF-Tu.GTP complex up to the GTP hydrolysis stage on the ribosome. The protein is Elongation factor Ts of Pseudomonas syringae pv. syringae (strain B728a).